The primary structure comprises 513 residues: Exoglucanase 1 (513 aa).

A signal peptide spans Met1–Ala17. The residue at position 18 (Gln18) is a Pyrrolidone carboxylic acid. Residues Gln18–Asn453 form a catalytic region. 10 disulfides stabilise this stretch: Cys21–Cys89, Cys36–Cys42, Cys67–Cys88, Cys78–Cys84, Cys155–Cys414, Cys189–Cys227, Cys193–Cys226, Cys247–Cys273, Cys255–Cys260, and Cys278–Cys348. An N-linked (GlcNAc) asparagine glycan is attached at Asn62. The active-site Nucleophile is Glu229. Residue Glu234 is the Proton donor/acceptor of the active site. Asn287 and Asn401 each carry an N-linked (GlcNAc) asparagine glycan. Residues Asn401–Asn437 show a composition bias toward polar residues. The interval Asn401–Ser480 is disordered. Gly residues predominate over residues Pro449–Arg459. The tract at residues Pro454–Pro477 is linker. Low complexity predominate over residues Gly460–Thr478. Thr461 carries O-linked (Man) threonine glycosylation. Residues Thr462, Thr463, and Thr464 are each glycosylated (O-linked (Man...) threonine). O-linked (Man) threonine glycosylation occurs at Thr469. 2 O-linked (Man...) threonine glycosylation sites follow: Thr470 and Thr471. Residues Ser473 and Ser474 are each glycosylated (O-linked (Man) serine). The CBM1 domain occupies Pro477–Leu513. Residue Thr478 is glycosylated (O-linked (Man) threonine). O-linked (Man) serine glycans are attached at residues Ser480 and Ser491. Intrachain disulfides connect Cys485–Cys502 and Cys496–Cys512.

This sequence belongs to the glycosyl hydrolase 7 (cellulase C) family. Post-translationally, N-glycosylated. The catalytic core domain comprises three N-linked glycans which each consist of a single N-acetylglucosamine residue. O-glycosylated. Within the linker domain, all 8 threonines are variably glycosylated with between at least one, and up to three, mannose residues per site. All serines in this domain are at least partially glycosylated with a single mannose residue. O-glycosylation of the cellulase linker provides protection from proteolysis. Linker glycans also contribute to binding affinity of cellobiohydrolases to cellulose.

It is found in the secreted. It carries out the reaction Hydrolysis of (1-&gt;4)-beta-D-glucosidic linkages in cellulose and cellotetraose, releasing cellobiose from the non-reducing ends of the chains.. Exocellobiohydrolases (CBH) that catalyzes the hydrolysis of 1,4-beta-D-glucosidic bonds in cellulose to release the disaccharide cellobiose. The degradation of cellulose involves an interplay between different cellulolytic enzymes. Hydrolysis starts with endoglucanases (EGs), which cut internal beta-1,4-glucosidic bonds in cellulose to reduce the polymerization degree of the substrate and create new chain ends for exocellobiohydrolases (CBHs). The CBHs release the disaccharide cellobiose from the non-reducing end of the cellulose polymer chain. Finally, beta-1,4-glucosidases hydrolyze the cellobiose and other short cello-oligosaccharides into glucose units. The chain is Exoglucanase 1 (cbh1) from Hypocrea jecorina (Trichoderma reesei).